The primary structure comprises 335 residues: Nucleoid-associated protein Ent638_2782 (335 aa).

This sequence belongs to the YejK family.

It localises to the cytoplasm. It is found in the nucleoid. In Enterobacter sp. (strain 638), this protein is Nucleoid-associated protein Ent638_2782.